Reading from the N-terminus, the 451-residue chain is Plasmepsin III (451 aa).

At 1–37 (MNLTIKEEDFTNTFMKNEESFNTFRVTKVKRWNAKRL) the chain is on the cytoplasmic side. Positions 1–123 (MNLTIKEEDF…KGLTKKSYLG (123 aa)) are excised as a propeptide. The chain crosses the membrane as a helical; Signal-anchor for type II membrane protein span at residues 38–58 (FKILFVTVFIVLAGGFSYYIF). At 59–451 (ENFVFQKNRK…TVGFALAKNL (393 aa)) the chain is on the lumenal side. Positions 139 to 446 (SFGEAKLGDN…DYDNHTVGFA (308 aa)) constitute a Peptidase A1 domain. 2 cysteine pairs are disulfide-bonded: cysteine 170–cysteine 175 and cysteine 372–cysteine 408.

Belongs to the peptidase A1 family. As to quaternary structure, probable homodimer; in the zymogen form. Monomer; in the active form. Acidification disrupts homodimerization. Component of the hemozoin formation complex (HFC) composed of falcipains FP2A and/or FP2B, plasmepsins PMII, PMIII/HAP and PMIV, heme detoxifying protein HDP and falcilysin FLN. The HFC complex is involved in hemoglobin degradation and detoxification of heme in the food vacuole during the asexual blood stage. Proteolytically cleaved into the soluble active mature form by cysteine proteases in the digestive vacuole of trophozoites. Proteolysis requires an acidic environment. Transprocessing may serve as an alternate activation system.

It localises to the membrane. It is found in the vacuole lumen. It carries out the reaction Hydrolysis of the bonds linking certain hydrophobic residues in hemoglobin or globin. Also cleaves small molecules substrates such as Ala-Leu-Glu-Arg-Thr-Phe-|-Phe(NO2)-Ser-Phe-Pro-Thr.. Its activity is regulated as follows. Dimerization causes loss of catalytic activity. Inhibited by pepstatin A. Inhibited by Zn(2+). In terms of biological role, during the asexual blood stage, catalyzes the cleavage of denatured host hemoglobin (Hb) or globins. Digestion of host Hb is an essential step which provides the parasite with amino acids for protein synthesis, and regulates osmolarity. In Plasmodium falciparum (isolate 3D7), this protein is Plasmepsin III.